The following is a 90-amino-acid chain: Barrier-to-autointegration factor-like protein (90 aa).

In terms of assembly, homodimer. Heterodimerizes with BANF1.

The protein localises to the nucleus. It localises to the cytoplasm. In terms of biological role, may play a role in BANF1 regulation and influence tissue-specific roles of BANF1. The protein is Barrier-to-autointegration factor-like protein (Banf2) of Mus musculus (Mouse).